The chain runs to 308 residues: Elongation factor Ts (308 aa).

The involved in Mg(2+) ion dislocation from EF-Tu stretch occupies residues 80–83; the sequence is TDFV.

This sequence belongs to the EF-Ts family.

The protein localises to the cytoplasm. Its function is as follows. Associates with the EF-Tu.GDP complex and induces the exchange of GDP to GTP. It remains bound to the aminoacyl-tRNA.EF-Tu.GTP complex up to the GTP hydrolysis stage on the ribosome. This Rhodopseudomonas palustris (strain BisB5) protein is Elongation factor Ts.